Reading from the N-terminus, the 122-residue chain is uncharacterized protein (122 aa).

The Cytoplasmic portion of the chain corresponds to 1–24; it reads MKNRKFSNLLLLRLRILCFNKKPA. A helical membrane pass occupies residues 25–45; it reads FAATSYAFFFRNFSVLIFIMV. Residues 46 to 57 lie on the Extracellular side of the membrane; the sequence is PDEKENGAAADN. Residues 58–78 traverse the membrane as a helical segment; the sequence is SFSLLIGRGVVLFLFYCPTAL. The Cytoplasmic portion of the chain corresponds to 79–122; it reads KMHGPVPAHWFCDKNIEAIQSDGQIRLLRSGPFPWSHGTCIRGA.

It is found in the membrane. This is an uncharacterized protein from Saccharomyces cerevisiae (strain ATCC 204508 / S288c) (Baker's yeast).